The chain runs to 434 residues: CC-adding tRNA nucleotidyltransferase (434 aa).

Position 19-22 (19-22 (GAVR)) interacts with CTP. Residues aspartate 32 and aspartate 34 each contribute to the Mg(2+) site. Residues 90–91 (RD), asparagine 95, 130–139 (DHLRSLRGVR), and arginine 175 contribute to the CTP site.

The protein belongs to the tRNA nucleotidyltransferase/poly(A) polymerase family. Mg(2+) serves as cofactor.

The enzyme catalyses a tRNA precursor + 2 CTP = a tRNA with a 3' CC end + 2 diphosphate. In terms of biological role, tRNA nucleotidyltransferase involved in the synthesis of the tRNA CCA terminus. Adds the two cytidine residues to tRNA. The polypeptide is CC-adding tRNA nucleotidyltransferase (Thermus thermophilus (strain ATCC BAA-163 / DSM 7039 / HB27)).